A 405-amino-acid chain; its full sequence is Enoyl-[acyl-carrier-protein] reductase [NADH] (405 aa).

Residues Gly48–Tyr53, Phe74–Glu75, Asp111–Ala112, and Leu140–Ala141 contribute to the NAD(+) site. Tyr226 provides a ligand contact to substrate. Tyr236 serves as the catalytic Proton donor. NAD(+) contacts are provided by residues Lys245 and Val274–Thr276.

The protein belongs to the TER reductase family. Monomer.

It carries out the reaction a 2,3-saturated acyl-[ACP] + NAD(+) = a (2E)-enoyl-[ACP] + NADH + H(+). Its pathway is lipid metabolism; fatty acid biosynthesis. Involved in the final reduction of the elongation cycle of fatty acid synthesis (FAS II). Catalyzes the reduction of a carbon-carbon double bond in an enoyl moiety that is covalently linked to an acyl carrier protein (ACP). This Xanthomonas oryzae pv. oryzae (strain PXO99A) protein is Enoyl-[acyl-carrier-protein] reductase [NADH].